We begin with the raw amino-acid sequence, 105 residues long: Small ribosomal subunit protein eS24 (105 aa).

This sequence belongs to the eukaryotic ribosomal protein eS24 family.

The chain is Small ribosomal subunit protein eS24 from Ignicoccus hospitalis (strain KIN4/I / DSM 18386 / JCM 14125).